Reading from the N-terminus, the 192-residue chain is uncharacterized protein (192 aa).

One can recognise a Nudix hydrolase domain in the interval 29 to 160 (HRQAAVLIPI…PLDIYRRGDS (132 aa)). The short motif at 67–89 (GAVDDTDASVIAAALREAEEEVA) is the Nudix box element. Mg(2+) contacts are provided by Glu83 and Glu87.

It belongs to the Nudix hydrolase family. PCD1 subfamily. Requires Mn(2+) as cofactor. The cofactor is Mg(2+).

Its function is as follows. Probably mediates the hydrolysis of some nucleoside diphosphate derivatives. This is an uncharacterized protein from Shigella boydii serotype 4 (strain Sb227).